We begin with the raw amino-acid sequence, 61 residues long: Probable tautomerase stu1128 (61 aa).

Pro-2 functions as the Proton acceptor; via imino nitrogen in the catalytic mechanism.

It belongs to the 4-oxalocrotonate tautomerase family.

The polypeptide is Probable tautomerase stu1128 (Streptococcus thermophilus (strain ATCC BAA-250 / LMG 18311)).